The following is a 176-amino-acid chain: Pituitary adenylate cyclase-activating polypeptide (176 aa).

Residues 1–24 form the signal peptide; sequence MTMCSGARLALLVYGILMHSSVYG. Residues 25–80 constitute a propeptide that is removed on maturation; the sequence is SPAASGLRFPGIRPENEVYDEDGNPQQDFYDSESLGVGSPASALRDAYALYYPAEE. Positions 98–135 are disordered; the sequence is QPSARRSPADAHGQGLGWDPGGSADDDSEPLSKRHSDG. The tract at residues 150 to 158 is important for receptor binding; the sequence is VKKYLAAVL. At leucine 158 the chain carries Leucine amide. The residue at position 169 (lysine 169) is a Lysine amide. Residues 173–176 constitute a propeptide that is removed on maturation; sequence IPYL.

Belongs to the glucagon family. As to quaternary structure, interacts with ADCYAP1R1 (via N-terminal extracellular domain); both PACAP27 and PACAP38 neuropeptides function as ligand for the ADCYAP1R1 receptor, which modulates the activity of downstream effectors. Interacts with VIPR1 and VIPR2; functions as ligand for VIPR1 and VIPR2 receptors, which modulate the activity of downstream effectors.

The protein localises to the secreted. In terms of biological role, PACAP is a neuropeptide involved in diverse array of physiological processes through activating the PACAP subfamily of class B1 G protein-coupled receptors: VIP receptor 1 (VIPR1), VIP receptor 2 (VIPR2), and PACAP type I receptor (ADCYAP1R1). Exerts neuroprotective and general cytoprotective effects due to anti-apoptotic, anti-inflammatory, and antioxidant actions. Promotes neuron projection development through the RAPGEF2/Rap1/B-Raf/ERK pathway. In chromaffin cells, induces long-lasting increase of intracellular calcium concentrations and neuroendocrine secretion. Involved in the control of glucose homeostasis, induces insulin secretion by pancreatic beta cells. PACAP exists in two bioactive forms from proteolysis of the same precursor protein, PACAP27 and PACAP38, which differ by eleven amino acid residues in the C-terminus. The sequence is that of Pituitary adenylate cyclase-activating polypeptide (ADCYAP1) from Bos taurus (Bovine).